A 134-amino-acid chain; its full sequence is Cytochrome b5 (134 aa).

The 77-residue stretch at Val6–Val82 folds into the Cytochrome b5 heme-binding domain. Residues His41 and His65 each contribute to the heme site. The helical transmembrane segment at Trp111–Thr131 threads the bilayer.

Belongs to the cytochrome b5 family.

It is found in the endoplasmic reticulum membrane. The protein resides in the microsome membrane. Functionally, cytochrome b5 is a membrane bound hemoprotein which function as an electron carrier for several membrane bound oxygenases. This Musca domestica (House fly) protein is Cytochrome b5 (Cyt-b5).